Here is a 431-residue protein sequence, read N- to C-terminus: Serine--tRNA ligase (431 aa).

235-237 (TSE) is an L-serine binding site. 266-268 (RSE) contributes to the ATP binding site. Glutamate 289 provides a ligand contact to L-serine. Residue 353-356 (EISS) participates in ATP binding. An L-serine-binding site is contributed by serine 388.

Belongs to the class-II aminoacyl-tRNA synthetase family. Type-1 seryl-tRNA synthetase subfamily. As to quaternary structure, homodimer. The tRNA molecule binds across the dimer.

The protein resides in the cytoplasm. It carries out the reaction tRNA(Ser) + L-serine + ATP = L-seryl-tRNA(Ser) + AMP + diphosphate + H(+). It catalyses the reaction tRNA(Sec) + L-serine + ATP = L-seryl-tRNA(Sec) + AMP + diphosphate + H(+). It participates in aminoacyl-tRNA biosynthesis; selenocysteinyl-tRNA(Sec) biosynthesis; L-seryl-tRNA(Sec) from L-serine and tRNA(Sec): step 1/1. Catalyzes the attachment of serine to tRNA(Ser). Is also able to aminoacylate tRNA(Sec) with serine, to form the misacylated tRNA L-seryl-tRNA(Sec), which will be further converted into selenocysteinyl-tRNA(Sec). This chain is Serine--tRNA ligase, found in Paraburkholderia phytofirmans (strain DSM 17436 / LMG 22146 / PsJN) (Burkholderia phytofirmans).